The sequence spans 251 residues: Tryptophan synthase alpha chain (251 aa).

Residues glutamate 46 and aspartate 57 each act as proton acceptor in the active site.

Belongs to the TrpA family. As to quaternary structure, tetramer of two alpha and two beta chains.

It catalyses the reaction (1S,2R)-1-C-(indol-3-yl)glycerol 3-phosphate + L-serine = D-glyceraldehyde 3-phosphate + L-tryptophan + H2O. It participates in amino-acid biosynthesis; L-tryptophan biosynthesis; L-tryptophan from chorismate: step 5/5. In terms of biological role, the alpha subunit is responsible for the aldol cleavage of indoleglycerol phosphate to indole and glyceraldehyde 3-phosphate. This chain is Tryptophan synthase alpha chain, found in Karelsulcia muelleri (strain GWSS) (Sulcia muelleri).